The following is a 164-amino-acid chain: Transcriptional regulator MraZ (164 aa).

SpoVT-AbrB domains are found at residues 7–57 (THQN…TVGA) and 86–129 (AYPL…NPEA). The segment at 133 to 164 (RRQAARSRARTLATSRRPASAPAAGNTAGAAE) is disordered. Positions 142–164 (RTLATSRRPASAPAAGNTAGAAE) are enriched in low complexity.

Belongs to the MraZ family. As to quaternary structure, forms oligomers.

It localises to the cytoplasm. The protein resides in the nucleoid. This is Transcriptional regulator MraZ from Gluconobacter oxydans (strain 621H) (Gluconobacter suboxydans).